Consider the following 251-residue polypeptide: SRR1-like protein (251 aa).

Belongs to the SRR1 family.

The protein resides in the cytoplasm. It localises to the nucleus. In Schizosaccharomyces pombe (strain 972 / ATCC 24843) (Fission yeast), this protein is SRR1-like protein.